The primary structure comprises 859 residues: Envelope glycoprotein (859 aa).

Residues 1–6 (MVSIAF) constitute a propeptide that is removed on maturation. The Extracellular segment spans residues 7–614 (YGGIPGGIST…KDLWSHIGNW (608 aa)). Residues asparagine 40, asparagine 112, asparagine 141, asparagine 148, asparagine 186, asparagine 214, asparagine 233, asparagine 244, asparagine 340, asparagine 368, asparagine 399, asparagine 406, and asparagine 411 are each glycosylated (N-linked (GlcNAc...) asparagine; by host). The fusion peptide stretch occupies residues 446–466 (FGISAIVAAIVAATAIAASAT). Residues asparagine 483 and asparagine 490 are each glycosylated (N-linked (GlcNAc...) asparagine; by host). Residues 498 to 513 (LIERQIKILYAMILQT) form an immunosuppression region. N-linked (GlcNAc...) asparagine; by host glycans are attached at residues asparagine 550 and asparagine 557. 2 coiled-coil regions span residues 576-624 (ILTT…SIIK) and 663-699 (KKFHHKHASREDTWDQAQHNIHLAGVTGGSGDKYYKQ). Residues 615–635 (IPGLGASIIKYIVMFLLIYLL) traverse the membrane as a helical segment. Topologically, residues 636 to 859 (LTSSPKILRA…TSHVSMPQYV (224 aa)) are cytoplasmic.

As to quaternary structure, the mature envelope protein (Env) consists of a trimer of SU-TM heterodimers attached by noncovalent interactions or by a labile interchain disulfide bond. Specific enzymatic cleavages in vivo yield mature proteins. Envelope glycoproteins are synthesized as an inactive precursor that is N-glycosylated and processed likely by host cell furin or by a furin-like protease in the Golgi to yield the mature SU and TM proteins. The cleavage site between SU and TM requires the minimal sequence [KR]-X-[KR]-R.

The protein localises to the virion membrane. Its subcellular location is the host cell membrane. Its function is as follows. The surface protein (SU) attaches the virus to the host cell by binding to its receptor. This interaction triggers the refolding of the transmembrane protein (TM) and is thought to activate its fusogenic potential by unmasking its fusion peptide. Fusion occurs at the host cell plasma membrane. In terms of biological role, the transmembrane protein (TM) acts as a class I viral fusion protein. Under the current model, the protein has at least 3 conformational states: pre-fusion native state, pre-hairpin intermediate state, and post-fusion hairpin state. During viral and target cell membrane fusion, the coiled coil regions (heptad repeats) assume a trimer-of-hairpins structure, positioning the fusion peptide in close proximity to the C-terminal region of the ectodomain. The formation of this structure appears to drive apposition and subsequent fusion of viral and target cell membranes. Membranes fusion leads to delivery of the nucleocapsid into the cytoplasm. This is Envelope glycoprotein (env) from Equine infectious anemia virus (isolate 1369) (EIAV).